The chain runs to 361 residues: sn-glycerol-3-phosphate import ATP-binding protein UgpC (361 aa).

The 232-residue stretch at 4 to 235 (LSLKGVRKSY…PATVFVAGFI (232 aa)) folds into the ABC transporter domain. ATP is bound at residue 37 to 44 (GPSGCGKS).

Belongs to the ABC transporter superfamily. sn-glycerol-3-phosphate importer (TC 3.A.1.1.3) family. In terms of assembly, the complex is composed of two ATP-binding proteins (UgpC), two transmembrane proteins (UgpA and UgpE) and a solute-binding protein (UgpB).

It is found in the cell inner membrane. It carries out the reaction sn-glycerol 3-phosphate(out) + ATP + H2O = sn-glycerol 3-phosphate(in) + ADP + phosphate + H(+). Functionally, part of the ABC transporter complex UgpBAEC involved in sn-glycerol-3-phosphate (G3P) import. Responsible for energy coupling to the transport system. The chain is sn-glycerol-3-phosphate import ATP-binding protein UgpC from Burkholderia lata (strain ATCC 17760 / DSM 23089 / LMG 22485 / NCIMB 9086 / R18194 / 383).